A 454-amino-acid chain; its full sequence is Tyrosine aminotransferase (454 aa).

Met-1 is subject to N-acetylmethionine. Lys-280 carries the post-translational modification N6-(pyridoxal phosphate)lysine. At Ser-448 the chain carries Phosphoserine.

It belongs to the class-I pyridoxal-phosphate-dependent aminotransferase family. As to quaternary structure, homodimer. Pyridoxal 5'-phosphate is required as a cofactor.

The enzyme catalyses L-tyrosine + 2-oxoglutarate = 3-(4-hydroxyphenyl)pyruvate + L-glutamate. It participates in amino-acid degradation; L-phenylalanine degradation; acetoacetate and fumarate from L-phenylalanine: step 2/6. Functionally, transaminase involved in tyrosine breakdown. Converts tyrosine to p-hydroxyphenylpyruvate. Can catalyze the reverse reaction, using glutamic acid, with 2-oxoglutarate as cosubstrate (in vitro). Has much lower affinity and transaminase activity towards phenylalanine. This is Tyrosine aminotransferase (TAT) from Homo sapiens (Human).